Here is a 533-residue protein sequence, read N- to C-terminus: MKGILGLSLLPLLTAASPVFVDSIHNEAAPILSATNAKEVPDSYIVVFKKHVTSELASAHHSWVQDIHDSQSERTELKKRSLFGLGDEVYLGLKNTFDIAGSLIGYSGHFHEDVIEQVRRHPDVDYIERDSEVHTMEGATEKNAPWGLARISHRDSLTFGNFNKYLYASEGGEGVDAYTIDTGINVDHVDFEGRATWGKTIPTNDEDLDGNGHGTHCSGTMAGKKYGVAKKANLYAVKVLRSSGSGTMSDVVSGVEYAVQAHIKKAKDAKNGKVKGFKGSVANMSLGGGKSKTLEDAVNAGVEAGLHFAVAAGNDNADACNYSPAAAEKAITVGASTLADERAYFSNYGECTDIFAPGLNILSTWIGSNYATNIISGTSMASPHIAGLLAYFVSLQPSSDSAFAVEELTPAKLKKDIIAIATEGALTDIPSNTPNVSHAAVGIYKRNELTQKFSSLPGTVVVPRTTPTSLAAVATRSPLPRTASRTVLRVSFTRPKSCSPRSLVPSTARSRMPSSHRSELVLSRRRSEDLVFF.

Residues 1-16 form the signal peptide; it reads MKGILGLSLLPLLTAA. One can recognise an Inhibitor I9 domain in the interval 43–136; the sequence is SYIVVFKKHV…IERDSEVHTM (94 aa). In terms of domain architecture, Peptidase S8 spans 145 to 450; that stretch reads PWGLARISHR…VGIYKRNELT (306 aa). Active-site charge relay system residues include Asp-181 and His-213. Asn-283 carries an N-linked (GlcNAc...) asparagine glycan. A disulfide bond links Cys-320 and Cys-351. Residue Ser-379 is the Charge relay system of the active site. Asn-435 carries an N-linked (GlcNAc...) asparagine glycan. A compositionally biased stretch (polar residues) spans 496 to 513; sequence KSCSPRSLVPSTARSRMP. Positions 496-519 are disordered; that stretch reads KSCSPRSLVPSTARSRMPSSHRSE.

The protein belongs to the peptidase S8 family.

This Aspergillus niger protein is Subtilisin-like serine protease pepC (pepC).